We begin with the raw amino-acid sequence, 312 residues long: Elongation factor Ts (312 aa).

The interval 84–87 (TDFL) is involved in Mg(2+) ion dislocation from EF-Tu.

It belongs to the EF-Ts family.

It is found in the cytoplasm. Functionally, associates with the EF-Tu.GDP complex and induces the exchange of GDP to GTP. It remains bound to the aminoacyl-tRNA.EF-Tu.GTP complex up to the GTP hydrolysis stage on the ribosome. This chain is Elongation factor Ts, found in Caulobacter sp. (strain K31).